Reading from the N-terminus, the 333-residue chain is MVSKPLFSLLLLTVALVVFQTGTLVNAEDSEPSSSTRKPLVKIVKGKKLCDKGWECKGWSEYCCNHTISDFFETYQFENLFSKRNSPVAHAVGFWDYRSFITAAAEYQPLGFGTAGEKLQGMKEVAAFLGHVGSKTSCGYGVATGGPLAWGLCYNKEMSPDQLYCDDYYKLTYPCTPGVSYHGRGALPVYWNYNYGQTGEALKVDLLSHPEYLENNATLAFQAAIWRWMTPPKKHLPSAHDVFVGKWKPTKNDTAAKRTPGFGATINVLYGDQICNSGFDNDEMNNIVSHYLYYLDLIGVGREEAGPHEKLSCADQEPFSSSSSAPPSSGSSS.

Residues 1 to 27 (MVSKPLFSLLLLTVALVVFQTGTLVNA) form the signal peptide. A disulfide bond links Cys50 and Cys56. Asn65 carries an N-linked (GlcNAc...) asparagine glycan. Cysteines 165 and 175 form a disulfide. 2 N-linked (GlcNAc...) asparagine glycosylation sites follow: Asn216 and Asn252. Cys275 and Cys313 are oxidised to a cystine. The tract at residues 307–333 (PHEKLSCADQEPFSSSSSAPPSSGSSS) is disordered. Residues 320-333 (SSSSSAPPSSGSSS) are compositionally biased toward low complexity.

Belongs to the glycosyl hydrolase 19 family. In terms of tissue distribution, mostly expressed in stems, especially in xylem and interfascicular fibers.

It localises to the secreted. In terms of biological role, no chitinase activity. Required for proper cell wall biosynthesis in etiolated seedlings. Prevents lignin accumulation in hypocotyls. The sequence is that of Chitinase-like protein 2 (CTL2) from Arabidopsis thaliana (Mouse-ear cress).